The sequence spans 156 residues: V-type proton ATPase 16 kDa proteolipid subunit c (156 aa).

Over 1–7 (MAENPIY) the chain is Lumenal. Residues 8-30 (GPFFGVMGAASAIIFSALGAAYG) form a helical membrane-spanning segment. The Cytoplasmic segment spans residues 31 to 52 (TAKSGTGIAAMSVMRPELIMKS). Residues 53-73 (IIPVVMAGIIAIYGLVVAVLI) traverse the membrane as a helical segment. The Lumenal portion of the chain corresponds to 74-92 (AGSLDAPSNNYTLYKGFIH). The chain crosses the membrane as a helical span at residues 93-114 (LGAGLAVGFSGLAAGFAIGIVG). Residues 115–126 (DAGVRGTAQQPR) are Cytoplasmic-facing. Residues 127–152 (LFVGMILILIFAEVLGLYGLIVAIYL) traverse the membrane as a helical segment. Topologically, residues 153-156 (YTKQ) are lumenal.

This sequence belongs to the V-ATPase proteolipid subunit family. In terms of assembly, V-ATPase is a heteromultimeric enzyme made up of two complexes: the ATP-hydrolytic V1 complex and the proton translocation V0 complex. The V1 complex consists of three catalytic AB heterodimers that form a heterohexamer, three peripheral stalks each consisting of EG heterodimers, one central rotor including subunits D and F, and the regulatory subunits C and H. The proton translocation complex V0 consists of the proton transport subunit a, a ring of proteolipid subunits c9c'', rotary subunit d, subunits e and f, and the accessory subunits VhaAC45 and ATP6AP2.

It localises to the membrane. In terms of biological role, proton-conducting pore forming subunit of the V0 complex of vacuolar(H+)-ATPase (V-ATPase), a multisubunit enzyme composed of a peripheral complex (V1) that hydrolyzes ATP and a membrane integral complex (V0) that translocates protons. V-ATPase is responsible for acidifying and maintaining the pH of intracellular compartments and in some cell types, is targeted to the plasma membrane, where it is responsible for acidifying the extracellular environment. The sequence is that of V-type proton ATPase 16 kDa proteolipid subunit c (VHA16) from Heliothis virescens (Tobacco budworm moth).